Reading from the N-terminus, the 283-residue chain is Bifunctional protein FolD (283 aa).

NADP(+) is bound by residues 165 to 167, Ser-190, and Thr-231; that span reads GRS.

This sequence belongs to the tetrahydrofolate dehydrogenase/cyclohydrolase family. Homodimer.

The catalysed reaction is (6R)-5,10-methylene-5,6,7,8-tetrahydrofolate + NADP(+) = (6R)-5,10-methenyltetrahydrofolate + NADPH. The enzyme catalyses (6R)-5,10-methenyltetrahydrofolate + H2O = (6R)-10-formyltetrahydrofolate + H(+). It participates in one-carbon metabolism; tetrahydrofolate interconversion. Functionally, catalyzes the oxidation of 5,10-methylenetetrahydrofolate to 5,10-methenyltetrahydrofolate and then the hydrolysis of 5,10-methenyltetrahydrofolate to 10-formyltetrahydrofolate. The sequence is that of Bifunctional protein FolD from Nocardia farcinica (strain IFM 10152).